The primary structure comprises 203 residues: Protein-methionine-sulfoxide reductase heme-binding subunit MsrQ (203 aa).

The next 5 helical transmembrane spans lie at 13–33, 79–99, 116–136, 147–167, and 169–189; these read IAIWLAATLPLLWLVLSINLG, LLGLWCFAWGTLHLLSYSILE, PYLTLGIISWLVLLALALTST, WQKLHNWVYVVAILAPIHYLW, and VKTLSPWPIIYAVMAALLLLL.

The protein belongs to the MsrQ family. Heterodimer of a catalytic subunit (MsrP) and a heme-binding subunit (MsrQ). FMN serves as cofactor. It depends on heme b as a cofactor.

Its subcellular location is the cell inner membrane. Its function is as follows. Part of the MsrPQ system that repairs oxidized periplasmic proteins containing methionine sulfoxide residues (Met-O), using respiratory chain electrons. Thus protects these proteins from oxidative-stress damage caused by reactive species of oxygen and chlorine generated by the host defense mechanisms. MsrPQ is essential for the maintenance of envelope integrity under bleach stress, rescuing a wide series of structurally unrelated periplasmic proteins from methionine oxidation. MsrQ provides electrons for reduction to the reductase catalytic subunit MsrP, using the quinone pool of the respiratory chain. The polypeptide is Protein-methionine-sulfoxide reductase heme-binding subunit MsrQ (Yersinia pseudotuberculosis serotype O:1b (strain IP 31758)).